The primary structure comprises 289 residues: RING-H2 finger protein ATL29 (289 aa).

Residues V25 to C45 form a helical membrane-spanning segment. Residues C110 to R152 form an RING-type; atypical zinc finger. The segment at T179 to D237 is disordered. The span at Q191 to S207 shows a compositional bias: polar residues. Residues I208–S219 are compositionally biased toward basic and acidic residues.

The protein belongs to the RING-type zinc finger family. ATL subfamily.

It localises to the membrane. It carries out the reaction S-ubiquitinyl-[E2 ubiquitin-conjugating enzyme]-L-cysteine + [acceptor protein]-L-lysine = [E2 ubiquitin-conjugating enzyme]-L-cysteine + N(6)-ubiquitinyl-[acceptor protein]-L-lysine.. It participates in protein modification; protein ubiquitination. The sequence is that of RING-H2 finger protein ATL29 (ATL29) from Arabidopsis thaliana (Mouse-ear cress).